We begin with the raw amino-acid sequence, 706 residues long: MSSRVLASRAAQPLKRHPTVVGAGDEAYPTPRRCFSSLHDRTVNQSADFSSTSKNYDRLGRRAKEKLLDREFFMSLLNSASTKREAKSYLARLKAQQPAKPQKKLQSTTVQQTIAESLPSGVNLGSFYGASRSVYQSPVFRQDSTPAPAREDIPERLHLALVKIKTPQLLDDSTLDGVARTLSQINRLGLACCVVVDPGSDGDTHTLRKIATEQVGRIATAVDRQPDSKSSHLYSVLSFPAKRPDIPTVSSRKQLLSPLRDGHILIVAPIAYTEDTPKALMVPANDAVLALTKELAGLATMPDPDEDPMITAQKINDLQKEVSLDRVILLDPLGGVPAFRGPQTSHAFINMDQEFEHIERELLQVRNPANNSQGESVVTNPISDSNAVSESASTEPTSTPAKQALLPMSVGEDTIDGHLDNLRLSQQTLAMLPSASSGIITSPVEVANSARSLESSPSELSVGTRRQRNPLIHNLLTDKPLLSSSLPLSRRARGSLHLPAPPTTFVKRGMPVSLIPDPRVQVWTAQTRPNMNLDDPHVDLPRLVHLIEDSFNRKLDVKDYLNRVNGRLAGLIIAGEYEGGAILTWELPPGVEDDGSESSTARMVPYLDKFAVLKRSQGAGGVADIVFNAMVRTCFPNGVCWRSRKDNPVNKWYFERSLGSWKLADTNWTMFWTTPDLPEKPQKFRDYEAVCRSIQPSWAEDTGVID.

Disordered regions lie at residues 1-25 (MSSR…GAGD) and 367-403 (NPAN…PAKQ). A mitochondrion-targeting transit peptide spans 1 to 35 (MSSRVLASRAAQPLKRHPTVVGAGDEAYPTPRRCF). Residues 367–388 (NPANNSQGESVVTNPISDSNAV) show a composition bias toward polar residues. Positions 389–401 (SESASTEPTSTPA) are enriched in low complexity. The 170-residue stretch at 527-696 (TRPNMNLDDP…YEAVCRSIQP (170 aa)) folds into the N-acetyltransferase domain.

Belongs to the acetyltransferase family.

It localises to the mitochondrion. The catalysed reaction is L-glutamate + acetyl-CoA = N-acetyl-L-glutamate + CoA + H(+). The protein operates within amino-acid biosynthesis; L-arginine biosynthesis; N(2)-acetyl-L-ornithine from L-glutamate: step 1/4. Its function is as follows. N-acetylglutamate synthase involved in arginine biosynthesis. This Emericella nidulans (strain FGSC A4 / ATCC 38163 / CBS 112.46 / NRRL 194 / M139) (Aspergillus nidulans) protein is Amino-acid acetyltransferase, mitochondrial (arg2).